A 931-amino-acid polypeptide reads, in one-letter code: Protein translocase subunit SecA (931 aa).

ATP-binding positions include Gln-87, 105-109 (GEGKT), and Asp-515. The Zn(2+) site is built by Cys-915, Cys-917, Cys-926, and His-927.

The protein belongs to the SecA family. Monomer and homodimer. Part of the essential Sec protein translocation apparatus which comprises SecA, SecYEG and auxiliary proteins SecDF-YajC and YidC. The cofactor is Zn(2+).

The protein resides in the cell inner membrane. It localises to the cytoplasm. The enzyme catalyses ATP + H2O + cellular proteinSide 1 = ADP + phosphate + cellular proteinSide 2.. Its function is as follows. Part of the Sec protein translocase complex. Interacts with the SecYEG preprotein conducting channel. Has a central role in coupling the hydrolysis of ATP to the transfer of proteins into and across the cell membrane, serving both as a receptor for the preprotein-SecB complex and as an ATP-driven molecular motor driving the stepwise translocation of polypeptide chains across the membrane. The sequence is that of Protein translocase subunit SecA from Burkholderia pseudomallei (strain 1106a).